Reading from the N-terminus, the 91-residue chain is Small ribosomal subunit protein uS17 (91 aa).

Belongs to the universal ribosomal protein uS17 family. As to quaternary structure, part of the 30S ribosomal subunit.

Its function is as follows. One of the primary rRNA binding proteins, it binds specifically to the 5'-end of 16S ribosomal RNA. The polypeptide is Small ribosomal subunit protein uS17 (Psychrobacter cryohalolentis (strain ATCC BAA-1226 / DSM 17306 / VKM B-2378 / K5)).